Consider the following 159-residue polypeptide: Transcriptional repressor NrdR (159 aa).

A zinc finger spans residues 3–34; sequence CPKCGYNKSSVVDSRQAEEGTTIRRRRECEKC. Positions 49–139 constitute an ATP-cone domain; that stretch reads LLVIKKDGTR…VYKSFKDVDE (91 aa).

The protein belongs to the NrdR family. It depends on Zn(2+) as a cofactor.

Negatively regulates transcription of bacterial ribonucleotide reductase nrd genes and operons by binding to NrdR-boxes. This is Transcriptional repressor NrdR from Streptococcus agalactiae serotype Ia (strain ATCC 27591 / A909 / CDC SS700).